The following is a 401-amino-acid chain: Argininosuccinate synthase (401 aa).

ATP is bound at residue 8–16; that stretch reads AYSGGLDTS. Y85 is a binding site for L-citrulline. An ATP-binding site is contributed by G115. L-aspartate is bound by residues T117, N121, and D122. N121 lines the L-citrulline pocket. Residues R125, S173, E258, and Y270 each contribute to the L-citrulline site.

This sequence belongs to the argininosuccinate synthase family. Type 1 subfamily. As to quaternary structure, homotetramer.

Its subcellular location is the cytoplasm. It catalyses the reaction L-citrulline + L-aspartate + ATP = 2-(N(omega)-L-arginino)succinate + AMP + diphosphate + H(+). The protein operates within amino-acid biosynthesis; L-arginine biosynthesis; L-arginine from L-ornithine and carbamoyl phosphate: step 2/3. The polypeptide is Argininosuccinate synthase (Staphylococcus aureus (strain MSSA476)).